The sequence spans 305 residues: UDP-3-O-acyl-N-acetylglucosamine deacetylase (305 aa).

The Zn(2+) site is built by histidine 78, histidine 237, and aspartate 241. The active-site Proton donor is histidine 264.

Belongs to the LpxC family. The cofactor is Zn(2+).

The enzyme catalyses a UDP-3-O-[(3R)-3-hydroxyacyl]-N-acetyl-alpha-D-glucosamine + H2O = a UDP-3-O-[(3R)-3-hydroxyacyl]-alpha-D-glucosamine + acetate. The protein operates within glycolipid biosynthesis; lipid IV(A) biosynthesis; lipid IV(A) from (3R)-3-hydroxytetradecanoyl-[acyl-carrier-protein] and UDP-N-acetyl-alpha-D-glucosamine: step 2/6. Catalyzes the hydrolysis of UDP-3-O-myristoyl-N-acetylglucosamine to form UDP-3-O-myristoylglucosamine and acetate, the committed step in lipid A biosynthesis. The protein is UDP-3-O-acyl-N-acetylglucosamine deacetylase of Ralstonia pickettii (strain 12J).